Reading from the N-terminus, the 400-residue chain is Peroxisome biogenesis factor 16 (400 aa).

The tract at residues 176–226 (QKQFQNKRPAVTMSINNNNNINNNDNNNINNNNNTNDDNFNNNNNNNNNRR) is disordered. Low complexity predominate over residues 190–224 (INNNNNINNNDNNNINNNNNTNDDNFNNNNNNNNN).

Belongs to the peroxin-16 family.

The protein localises to the cytoplasm. Its function is as follows. Required for peroxisome membrane biogenesis. The sequence is that of Peroxisome biogenesis factor 16 (pex16) from Dictyostelium discoideum (Social amoeba).